The sequence spans 503 residues: ATP synthase subunit alpha (503 aa).

169-176 lines the ATP pocket; sequence GDRSTGKT.

The protein belongs to the ATPase alpha/beta chains family. As to quaternary structure, F-type ATPases have 2 components, CF(1) - the catalytic core - and CF(0) - the membrane proton channel. CF(1) has five subunits: alpha(3), beta(3), gamma(1), delta(1), epsilon(1). CF(0) has three main subunits: a(1), b(2) and c(9-12). The alpha and beta chains form an alternating ring which encloses part of the gamma chain. CF(1) is attached to CF(0) by a central stalk formed by the gamma and epsilon chains, while a peripheral stalk is formed by the delta and b chains.

The protein resides in the cell membrane. It catalyses the reaction ATP + H2O + 4 H(+)(in) = ADP + phosphate + 5 H(+)(out). Produces ATP from ADP in the presence of a proton gradient across the membrane. The alpha chain is a regulatory subunit. This is ATP synthase subunit alpha from Dehalococcoides mccartyi (strain ATCC BAA-2266 / KCTC 15142 / 195) (Dehalococcoides ethenogenes (strain 195)).